The chain runs to 786 residues: Mitochondrial intermediate peptidase (786 aa).

A mitochondrion-targeting transit peptide spans 1 to 29; the sequence is MSSILLRSYRHHAKVWTRPSSKSSFIRSL. Position 567 (histidine 567) interacts with Zn(2+). Glutamate 568 is an active-site residue. 2 residues coordinate Zn(2+): histidine 571 and histidine 574.

It belongs to the peptidase M3 family. The cofactor is Zn(2+).

It is found in the mitochondrion matrix. It carries out the reaction Release of an N-terminal octapeptide as second stage of processing of some proteins imported into the mitochondrion.. Cleaves proteins, imported into the mitochondrion, to their mature size. While most mitochondrial precursor proteins are processed to the mature form in one step by mitochondrial processing peptidase (MPP), the sequential cleavage by MIP of an octapeptide after initial processing by MPP is a required step for a subgroup of nuclear-encoded precursor proteins destined for the matrix or the inner membrane. The chain is Mitochondrial intermediate peptidase (OCT1) from Meyerozyma guilliermondii (strain ATCC 6260 / CBS 566 / DSM 6381 / JCM 1539 / NBRC 10279 / NRRL Y-324) (Yeast).